The sequence spans 456 residues: CBL-interacting protein kinase 16 (456 aa).

A Protein kinase domain is found at 22-277; sequence YELGRLLGQG…IPEIMRTPWF (256 aa). Residues 28 to 36 and lysine 51 contribute to the ATP site; that span reads LGQGTFAKV. Aspartate 145 acts as the Proton acceptor in catalysis. The segment at 163-192 is activation loop; that stretch reads DFGLAALPEQLRQDGLLHTQCGTPAYVAPE. The 27-residue stretch at 309–335 folds into the NAF domain; sequence AMSPRTCNAFQLISSMSSGFDLSGMFE. Positions 339–368 are PPI; sequence KAATVFTSRAPAATVIQKLEAVGRSLGYSA.

It belongs to the protein kinase superfamily. CAMK Ser/Thr protein kinase family. SNF1 subfamily. The cofactor is Mn(2+).

The enzyme catalyses L-seryl-[protein] + ATP = O-phospho-L-seryl-[protein] + ADP + H(+). It carries out the reaction L-threonyl-[protein] + ATP = O-phospho-L-threonyl-[protein] + ADP + H(+). CIPK serine-threonine protein kinases interact with CBL proteins. Binding of a CBL protein to the regulatory NAF domain of CIPK protein lead to the activation of the kinase in a calcium-dependent manner. The sequence is that of CBL-interacting protein kinase 16 (CIPK16) from Oryza sativa subsp. japonica (Rice).